The primary structure comprises 63 residues: Large ribosomal subunit protein bL32 (63 aa).

The segment at 1–22 (MANPKAKMSKSRRDKRRAQFNA) is disordered. A compositionally biased stretch (basic residues) spans 7 to 18 (KMSKSRRDKRRA).

This sequence belongs to the bacterial ribosomal protein bL32 family.

The sequence is that of Large ribosomal subunit protein bL32 from Chlorobium limicola (strain DSM 245 / NBRC 103803 / 6330).